The following is a 407-amino-acid chain: Multifunctional CCA protein (407 aa).

ATP-binding residues include G8 and R11. Residues G8 and R11 each coordinate CTP. Residues D21 and D23 each coordinate Mg(2+). Residues R91, R137, and R140 each coordinate ATP. CTP-binding residues include R91, R137, and R140. Residues 226–327 form the HD domain; that stretch reads TGIHVMAVVD…VKLLERTDAL (102 aa).

This sequence belongs to the tRNA nucleotidyltransferase/poly(A) polymerase family. Bacterial CCA-adding enzyme type 1 subfamily. As to quaternary structure, monomer. Can also form homodimers and oligomers. Requires Mg(2+) as cofactor. It depends on Ni(2+) as a cofactor.

The enzyme catalyses a tRNA precursor + 2 CTP + ATP = a tRNA with a 3' CCA end + 3 diphosphate. It catalyses the reaction a tRNA with a 3' CCA end + 2 CTP + ATP = a tRNA with a 3' CCACCA end + 3 diphosphate. Functionally, catalyzes the addition and repair of the essential 3'-terminal CCA sequence in tRNAs without using a nucleic acid template. Adds these three nucleotides in the order of C, C, and A to the tRNA nucleotide-73, using CTP and ATP as substrates and producing inorganic pyrophosphate. tRNA 3'-terminal CCA addition is required both for tRNA processing and repair. Also involved in tRNA surveillance by mediating tandem CCA addition to generate a CCACCA at the 3' terminus of unstable tRNAs. While stable tRNAs receive only 3'-terminal CCA, unstable tRNAs are marked with CCACCA and rapidly degraded. In Aromatoleum aromaticum (strain DSM 19018 / LMG 30748 / EbN1) (Azoarcus sp. (strain EbN1)), this protein is Multifunctional CCA protein.